A 1059-amino-acid chain; its full sequence is Isoleucine--tRNA ligase (1059 aa).

A 'HIGH' region motif is present at residues 47–57; it reads PYTSGQMHLGT. Positions 606–610 match the 'KMSKS' region motif; the sequence is KMSKS. Lysine 609 is a binding site for ATP.

Belongs to the class-I aminoacyl-tRNA synthetase family. IleS type 2 subfamily. In terms of assembly, monomer. Requires Zn(2+) as cofactor.

It is found in the cytoplasm. It catalyses the reaction tRNA(Ile) + L-isoleucine + ATP = L-isoleucyl-tRNA(Ile) + AMP + diphosphate. Functionally, catalyzes the attachment of isoleucine to tRNA(Ile). As IleRS can inadvertently accommodate and process structurally similar amino acids such as valine, to avoid such errors it has two additional distinct tRNA(Ile)-dependent editing activities. One activity is designated as 'pretransfer' editing and involves the hydrolysis of activated Val-AMP. The other activity is designated 'posttransfer' editing and involves deacylation of mischarged Val-tRNA(Ile). In Haloquadratum walsbyi (strain DSM 16790 / HBSQ001), this protein is Isoleucine--tRNA ligase.